We begin with the raw amino-acid sequence, 394 residues long: Formate-dependent phosphoribosylglycinamide formyltransferase (394 aa).

Residues 21–22 (EL) and Glu-81 contribute to the N(1)-(5-phospho-beta-D-ribosyl)glycinamide site. ATP contacts are provided by residues Arg-113, Lys-154, 159–164 (SSGKGQ), 194–197 (EEFI), and Glu-202. An ATP-grasp domain is found at 118–307 (RLAAEELGLP…QFELHVRAIL (190 aa)). 2 residues coordinate Mg(2+): Glu-266 and Glu-278. N(1)-(5-phospho-beta-D-ribosyl)glycinamide contacts are provided by residues Asp-285, Lys-355, and 362 to 363 (RR).

This sequence belongs to the PurK/PurT family. As to quaternary structure, homodimer.

The enzyme catalyses N(1)-(5-phospho-beta-D-ribosyl)glycinamide + formate + ATP = N(2)-formyl-N(1)-(5-phospho-beta-D-ribosyl)glycinamide + ADP + phosphate + H(+). Its pathway is purine metabolism; IMP biosynthesis via de novo pathway; N(2)-formyl-N(1)-(5-phospho-D-ribosyl)glycinamide from N(1)-(5-phospho-D-ribosyl)glycinamide (formate route): step 1/1. Involved in the de novo purine biosynthesis. Catalyzes the transfer of formate to 5-phospho-ribosyl-glycinamide (GAR), producing 5-phospho-ribosyl-N-formylglycinamide (FGAR). Formate is provided by PurU via hydrolysis of 10-formyl-tetrahydrofolate. The polypeptide is Formate-dependent phosphoribosylglycinamide formyltransferase (Pelobacter propionicus (strain DSM 2379 / NBRC 103807 / OttBd1)).